A 466-amino-acid chain; its full sequence is 3-isopropylmalate dehydratase large subunit (466 aa).

[4Fe-4S] cluster-binding residues include Cys-347, Cys-407, and Cys-410.

The protein belongs to the aconitase/IPM isomerase family. LeuC type 1 subfamily. As to quaternary structure, heterodimer of LeuC and LeuD. It depends on [4Fe-4S] cluster as a cofactor.

The catalysed reaction is (2R,3S)-3-isopropylmalate = (2S)-2-isopropylmalate. Its pathway is amino-acid biosynthesis; L-leucine biosynthesis; L-leucine from 3-methyl-2-oxobutanoate: step 2/4. Catalyzes the isomerization between 2-isopropylmalate and 3-isopropylmalate, via the formation of 2-isopropylmaleate. This chain is 3-isopropylmalate dehydratase large subunit, found in Pectobacterium carotovorum subsp. carotovorum (strain PC1).